We begin with the raw amino-acid sequence, 212 residues long: Uridine kinase (212 aa).

Residue 13-20 (GGSGSGKT) coordinates ATP.

It belongs to the uridine kinase family.

The protein resides in the cytoplasm. It catalyses the reaction uridine + ATP = UMP + ADP + H(+). The catalysed reaction is cytidine + ATP = CMP + ADP + H(+). It functions in the pathway pyrimidine metabolism; CTP biosynthesis via salvage pathway; CTP from cytidine: step 1/3. Its pathway is pyrimidine metabolism; UMP biosynthesis via salvage pathway; UMP from uridine: step 1/1. This chain is Uridine kinase, found in Bacillus mycoides (strain KBAB4) (Bacillus weihenstephanensis).